Consider the following 86-residue polypeptide: MQIDKNGIIKSAQLHDKDVGSIQVQVSLLTSQIKQLTDHLLANKKDFISKRGLYAKVSKRKRLLKYLKHNDLEAYRNLVKTLNLRG.

It belongs to the universal ribosomal protein uS15 family. As to quaternary structure, part of the 30S ribosomal subunit. Forms a bridge to the 50S subunit in the 70S ribosome, contacting the 23S rRNA.

Functionally, one of the primary rRNA binding proteins, it binds directly to 16S rRNA where it helps nucleate assembly of the platform of the 30S subunit by binding and bridging several RNA helices of the 16S rRNA. In terms of biological role, forms an intersubunit bridge (bridge B4) with the 23S rRNA of the 50S subunit in the ribosome. The chain is Small ribosomal subunit protein uS15 from Mycoplasma pneumoniae (strain ATCC 29342 / M129 / Subtype 1) (Mycoplasmoides pneumoniae).